A 492-amino-acid chain; its full sequence is Alpha-2-antiplasmin (492 aa).

The first 22 residues, 1–22 (MALLWGLLALILSCLSSLCSAQ), serve as a signal peptide directing secretion. The propeptide occupies 23–40 (FSPVSTMEPLDLQLMDGQ). The segment at 56–76 (QEPGGQIAPKKAPEDCKLSPT) is disordered. Cysteines 71 and 144 form a disulfide. Asparagine 127, asparagine 249, asparagine 296, asparagine 310, and asparagine 317 each carry an N-linked (GlcNAc...) asparagine glycan. The tract at residues 433–492 (SVRNPNPGAQPERKEQQDSPDGKDSFQDHKGLPRGDKPFDPDLKLGPPSEEDYAQPSSPK) is disordered. The segment covering 443-475 (PERKEQQDSPDGKDSFQDHKGLPRGDKPFDPDL) has biased composition (basic and acidic residues). Tyrosine 485 bears the Sulfotyrosine mark.

It belongs to the serpin family. As to quaternary structure, forms protease inhibiting heterodimer with TMPRSS7. Proteolytically cleaved at Pro-31 by both the prolyl endopeptidase FAP form and antiplasmin-cleaving enzyme FAP soluble form to generate mature alpha-2-antiplasmin. In terms of tissue distribution, expressed by the liver and secreted in plasma.

The protein localises to the secreted. Serine protease inhibitor. The major targets of this inhibitor are plasmin and trypsin, but it also inactivates matriptase-3/TMPRSS7 and chymotrypsin. This chain is Alpha-2-antiplasmin (SERPINF2), found in Bos taurus (Bovine).